The sequence spans 327 residues: Quinone oxidoreductase (327 aa).

Belongs to the zinc-containing alcohol dehydrogenase family. Quinone oxidoreductase subfamily. As to quaternary structure, homodimer.

The catalysed reaction is 2 a quinone + NADPH + H(+) = 2 a 1,4-benzosemiquinone + NADP(+). This Salmonella typhimurium (strain LT2 / SGSC1412 / ATCC 700720) protein is Quinone oxidoreductase (qor).